A 413-amino-acid chain; its full sequence is Putative syntaxin-5 (413 aa).

Over 1–391 the chain is Cytoplasmic; sequence MSDFHNIRSR…RYLQNISKNR (391 aa). The segment at 257–290 is disordered; it reads KNRRDKFSSGAAVPMGLPSSSSGANVRSKLLQDD. In terms of domain architecture, t-SNARE coiled-coil homology spans 321–383; it reads LEYAQARSNT…DMAHSELVRY (63 aa). A helical; Anchor for type IV membrane protein transmembrane segment spans residues 392–412; it reads WLMIQVFGVLMVFFVVFVLFL. Position 413 (Thr-413) is a topological domain, extracellular.

It belongs to the syntaxin family.

The protein localises to the membrane. Potentially involved in docking of synaptic vesicles at presynaptic active zones. The sequence is that of Putative syntaxin-5 (syx-5) from Caenorhabditis elegans.